Reading from the N-terminus, the 875-residue chain is Metal transporter CNNM2 (875 aa).

Over 1-250 (MIGCGACEPE…TKMIVGEEKK (250 aa)) the chain is Extracellular. Asn112 carries an N-linked (GlcNAc...) asparagine glycan. The tract at residues 121–149 (TEHERRRHTPSERGLGGPAPPEPDSGPQR) is disordered. Residues 251–271 (FLLPFWLQVIFISLLLCLSGM) traverse the membrane as a helical segment. The region spanning 251–431 (FLLPFWLQVI…DPYNDLVKEE (181 aa)) is the CNNM transmembrane domain. At 272–313 (FSGLNLGLMALDPMELRIVQNCGTEKEKNYAKRIEPVRRQGN) the chain is on the cytoplasmic side. The segment at residues 314-334 (YLLCSLLLGNVLVNTTLTILL) is an intramembrane region (helical). The Cytoplasmic portion of the chain corresponds to 335–338 (DDIA). Residues 339–359 (GSGLVAVVVSTIGIVIFGEIV) form a helical membrane-spanning segment. Residues 360–368 (PQAICSRHG) are Extracellular-facing. Residues 369 to 389 (LAVGANTIFLTKFFMMMTFPA) form a helical membrane-spanning segment. Topologically, residues 390-875 (SYPVSKLLDC…NHSLHSEGAI (486 aa)) are cytoplasmic. CBS domains follow at residues 450-511 (MTPL…CTPL) and 518-584 (YNHP…ILDE). Residues 741 to 763 (AGSPGENKSPPRPCGLNHSDSLS) form a disordered region. A Phosphoserine modification is found at Ser761.

This sequence belongs to the ACDP family. Isoform 1 and isoform 2 may interact with each other. Post-translationally, the N-terminus is cleaved within the endoplasmic reticulum. The signal peptidase complex seems to be involved in the processing, but the exact cleavage site has not been identified. Widely expressed, with highest levels in kidney, lung, spleen and testis. In the kidney, predominantly expressed in the distal convoluted tubule and, at lower levels, in the connecting tubule (at protein level).

The protein resides in the cell membrane. In terms of biological role, divalent metal cation transporter. Mediates transport of divalent metal cations in an order of Mg(2+) &gt; Co(2+) &gt; Mn(2+) &gt; Sr(2+) &gt; Ba(2+) &gt; Cu(2+) &gt; Fe(2+). This is Metal transporter CNNM2 (Cnnm2) from Mus musculus (Mouse).